The primary structure comprises 551 residues: Putative transport protein CGSHiGG_02670 (551 aa).

5 consecutive transmembrane segments (helical) span residues 4 to 24, 28 to 48, 65 to 85, 95 to 115, and 157 to 177; these read IAIT…IGHW, GVGL…HFTN, FGLI…FFSS, AFAI…HKIA, and VSYA…MWLI. 2 RCK C-terminal domains span residues 191–275 and 277–360; these read RFNA…IIGH and VDAP…VIGN. 6 consecutive transmembrane segments (helical) span residues 370–390, 402–424, 438–458, 463–483, 492–512, and 529–549; these read MLPV…PFYI, AGGP…LYWF, IVLF…DTLV, LEWM…VGTI, YLTI…LAFA, and VYPL…VLLW.

It belongs to the AAE transporter (TC 2.A.81) family. YidE subfamily.

The protein resides in the cell membrane. This is Putative transport protein CGSHiGG_02670 from Haemophilus influenzae (strain PittGG).